Consider the following 127-residue polypeptide: MLQLLLAVFIGGGTGSVARWMLSMRFNPLHQAIPLGTLAANLLGAFIIGMGFAWFSRMTNIDPVWKVLITTGFCGGLTTFSTFSAEVVFLLQEGRFGWAMLNVLVNLLGSFAMTALAFWIFSASTAN.

The next 4 helical transmembrane spans lie at 4–24, 35–55, 71–91, and 103–123; these read LLLAVFIGGGTGSVARWMLSM, LGTLAANLLGAFIIGMGFAWF, TGFCGGLTTFSTFSAEVVFLL, and VLVNLLGSFAMTALAFWIFSA. Na(+) contacts are provided by Gly-75 and Thr-78.

This sequence belongs to the fluoride channel Fluc/FEX (TC 1.A.43) family.

Its subcellular location is the cell inner membrane. It catalyses the reaction fluoride(in) = fluoride(out). Na(+) is not transported, but it plays an essential structural role and its presence is essential for fluoride channel function. Functionally, fluoride-specific ion channel. Important for reducing fluoride concentration in the cell, thus reducing its toxicity. The chain is Fluoride-specific ion channel FluC from Escherichia fergusonii (strain ATCC 35469 / DSM 13698 / CCUG 18766 / IAM 14443 / JCM 21226 / LMG 7866 / NBRC 102419 / NCTC 12128 / CDC 0568-73).